Here is a 288-residue protein sequence, read N- to C-terminus: Glycine--tRNA ligase alpha subunit (288 aa).

This sequence belongs to the class-II aminoacyl-tRNA synthetase family. Tetramer of two alpha and two beta subunits.

The protein resides in the cytoplasm. The enzyme catalyses tRNA(Gly) + glycine + ATP = glycyl-tRNA(Gly) + AMP + diphosphate. The polypeptide is Glycine--tRNA ligase alpha subunit (Rickettsia canadensis (strain McKiel)).